We begin with the raw amino-acid sequence, 286 residues long: Bifunctional protein FolD (286 aa).

NADP(+) contacts are provided by residues 166–168 and Ile232; that span reads GAS.

The protein belongs to the tetrahydrofolate dehydrogenase/cyclohydrolase family. In terms of assembly, homodimer.

It carries out the reaction (6R)-5,10-methylene-5,6,7,8-tetrahydrofolate + NADP(+) = (6R)-5,10-methenyltetrahydrofolate + NADPH. The catalysed reaction is (6R)-5,10-methenyltetrahydrofolate + H2O = (6R)-10-formyltetrahydrofolate + H(+). It participates in one-carbon metabolism; tetrahydrofolate interconversion. In terms of biological role, catalyzes the oxidation of 5,10-methylenetetrahydrofolate to 5,10-methenyltetrahydrofolate and then the hydrolysis of 5,10-methenyltetrahydrofolate to 10-formyltetrahydrofolate. The sequence is that of Bifunctional protein FolD from Vibrio parahaemolyticus serotype O3:K6 (strain RIMD 2210633).